The following is a 318-amino-acid chain: Pyrimidine-specific ribonucleoside hydrolase RihA (318 aa).

The active site involves histidine 240.

It belongs to the IUNH family. RihA subfamily.

Hydrolyzes cytidine or uridine to ribose and cytosine or uracil, respectively. This chain is Pyrimidine-specific ribonucleoside hydrolase RihA, found in Shewanella sp. (strain MR-4).